The chain runs to 120 residues: Large ribosomal subunit protein uL18 (120 aa).

Positions 1 to 10 are enriched in basic and acidic residues; that stretch reads MKLTRRESKE. Residues 1–26 are disordered; that stretch reads MKLTRRESKERRHRRVRGKVQGSPER.

The protein belongs to the universal ribosomal protein uL18 family. Part of the 50S ribosomal subunit; part of the 5S rRNA/L5/L18/L25 subcomplex. Contacts the 5S and 23S rRNAs.

In terms of biological role, this is one of the proteins that bind and probably mediate the attachment of the 5S RNA into the large ribosomal subunit, where it forms part of the central protuberance. The sequence is that of Large ribosomal subunit protein uL18 from Nostoc sp. (strain PCC 7120 / SAG 25.82 / UTEX 2576).